A 244-amino-acid chain; its full sequence is Dirigent protein 18 (244 aa).

The N-terminal stretch at methionine 1–alanine 25 is a signal peptide.

Belongs to the plant dirigent protein family. Homodimer.

The protein localises to the secreted. It is found in the extracellular space. The protein resides in the apoplast. In terms of biological role, dirigent proteins impart stereoselectivity on the phenoxy radical-coupling reaction, yielding optically active lignans from two molecules of coniferyl alcohol in the biosynthesis of lignans, flavonolignans, and alkaloids and thus plays a central role in plant secondary metabolism. The polypeptide is Dirigent protein 18 (DIR18) (Arabidopsis thaliana (Mouse-ear cress)).